Consider the following 134-residue polypeptide: Probable histone H2A.3 (134 aa).

This sequence belongs to the histone H2A family. In terms of assembly, the nucleosome is a histone octamer containing two molecules each of H2A, H2B, H3 and H4 assembled in one H3-H4 heterotetramer and two H2A-H2B heterodimers. The octamer wraps approximately 147 bp of DNA.

It is found in the nucleus. Its subcellular location is the chromosome. In terms of biological role, core component of nucleosome. Nucleosomes wrap and compact DNA into chromatin, limiting DNA accessibility to the cellular machineries which require DNA as a template. Histones thereby play a central role in transcription regulation, DNA repair, DNA replication and chromosomal stability. DNA accessibility is regulated via a complex set of post-translational modifications of histones, also called histone code, and nucleosome remodeling. In Oryza sativa subsp. indica (Rice), this protein is Probable histone H2A.3.